The following is a 433-amino-acid chain: Elongation factor 1-alpha (433 aa).

The region spanning K5–R227 is the tr-type G domain. The segment at G14–S21 is G1. G14 to S21 is a binding site for GTP. S21 lines the Mg(2+) pocket. The tract at residues G70–D74 is G2. Residues D91–G94 form a G3 region. Residues D91–H95 and N153–D156 each bind GTP. A G4 region spans residues N153 to D156. The segment at S192–W194 is G5.

The protein belongs to the TRAFAC class translation factor GTPase superfamily. Classic translation factor GTPase family. EF-Tu/EF-1A subfamily.

Its subcellular location is the cytoplasm. It catalyses the reaction GTP + H2O = GDP + phosphate + H(+). GTP hydrolase that promotes the GTP-dependent binding of aminoacyl-tRNA to the A-site of ribosomes during protein biosynthesis. This chain is Elongation factor 1-alpha, found in Thermofilum pendens (strain DSM 2475 / Hrk 5).